A 494-amino-acid polypeptide reads, in one-letter code: Glutamyl-tRNA(Gln) amidotransferase subunit A (494 aa).

Residues Lys-88 and Ser-163 each act as charge relay system in the active site. Ser-187 functions as the Acyl-ester intermediate in the catalytic mechanism.

This sequence belongs to the amidase family. GatA subfamily. Heterotrimer of A, B and C subunits.

It catalyses the reaction L-glutamyl-tRNA(Gln) + L-glutamine + ATP + H2O = L-glutaminyl-tRNA(Gln) + L-glutamate + ADP + phosphate + H(+). Its function is as follows. Allows the formation of correctly charged Gln-tRNA(Gln) through the transamidation of misacylated Glu-tRNA(Gln) in organisms which lack glutaminyl-tRNA synthetase. The reaction takes place in the presence of glutamine and ATP through an activated gamma-phospho-Glu-tRNA(Gln). This chain is Glutamyl-tRNA(Gln) amidotransferase subunit A, found in Corynebacterium diphtheriae (strain ATCC 700971 / NCTC 13129 / Biotype gravis).